Consider the following 664-residue polypeptide: Methionine--tRNA ligase (664 aa).

The 'HIGH' region signature appears at 15–25 (YYPSGKLHIGH). The 'KMSKS' region motif lies at 311 to 315 (KMSKS). Residue Lys-314 coordinates ATP. Residues 536-556 (MQGSAPAKEETKEEEPQEVDR) form a disordered region. Positions 570–662 (LRVAEVIEAE…IDQSLPKGTR (93 aa)) constitute a tRNA-binding domain.

This sequence belongs to the class-I aminoacyl-tRNA synthetase family. MetG type 2B subfamily. Homodimer.

It is found in the cytoplasm. The enzyme catalyses tRNA(Met) + L-methionine + ATP = L-methionyl-tRNA(Met) + AMP + diphosphate. Its function is as follows. Is required not only for elongation of protein synthesis but also for the initiation of all mRNA translation through initiator tRNA(fMet) aminoacylation. This Bacillus subtilis (strain 168) protein is Methionine--tRNA ligase (metG).